A 166-amino-acid chain; its full sequence is Endoribonuclease YbeY (166 aa).

Zn(2+) is bound by residues His132, His136, and His142.

It belongs to the endoribonuclease YbeY family. Zn(2+) serves as cofactor.

The protein localises to the cytoplasm. Functionally, single strand-specific metallo-endoribonuclease involved in late-stage 70S ribosome quality control and in maturation of the 3' terminus of the 16S rRNA. This chain is Endoribonuclease YbeY, found in Clostridium botulinum (strain Kyoto / Type A2).